Consider the following 429-residue polypeptide: Adenylosuccinate synthetase (429 aa).

Residues 12–18 (GDEGKGK) and 40–42 (GHT) each bind GTP. The Proton acceptor role is filled by D13. 2 residues coordinate Mg(2+): D13 and G40. IMP is bound by residues 13–16 (DEGK), 38–41 (NAGH), T128, R142, Q224, T239, and R303. H41 (proton donor) is an active-site residue. 299–305 (VTTGRPR) contributes to the substrate binding site. GTP contacts are provided by residues R305, 331-333 (LLD), and 413-415 (SVG).

The protein belongs to the adenylosuccinate synthetase family. As to quaternary structure, homodimer. Requires Mg(2+) as cofactor.

It is found in the cytoplasm. The enzyme catalyses IMP + L-aspartate + GTP = N(6)-(1,2-dicarboxyethyl)-AMP + GDP + phosphate + 2 H(+). It participates in purine metabolism; AMP biosynthesis via de novo pathway; AMP from IMP: step 1/2. Its function is as follows. Plays an important role in the de novo pathway of purine nucleotide biosynthesis. Catalyzes the first committed step in the biosynthesis of AMP from IMP. The sequence is that of Adenylosuccinate synthetase from Clostridioides difficile (strain 630) (Peptoclostridium difficile).